The following is a 180-amino-acid chain: MFPMVTGFINYGQQTIRAARYIGQSFIITLSHTNRLPVTIQYPYEKSIASERFRGRIHFEFDKCIACEVCVRVCPIDLPVVDWRLEKNIKKKQLLNYSIDFGFCIFCGNCVEYCPTNCLSMTEEYELSTYDRHELNYNQIALGRLPMSVIGDYTIQTVLNWTQIKIDKNKLLDSRTITNY.

4Fe-4S ferredoxin-type domains are found at residues 55–84 and 95–124; these read GRIH…VDWR and LNYS…MTEE. Positions 64, 67, 70, 74, 104, 107, 110, and 114 each coordinate [4Fe-4S] cluster.

Belongs to the complex I 23 kDa subunit family. NDH is composed of at least 16 different subunits, 5 of which are encoded in the nucleus. It depends on [4Fe-4S] cluster as a cofactor.

It localises to the plastid. It is found in the chloroplast thylakoid membrane. The enzyme catalyses a plastoquinone + NADH + (n+1) H(+)(in) = a plastoquinol + NAD(+) + n H(+)(out). The catalysed reaction is a plastoquinone + NADPH + (n+1) H(+)(in) = a plastoquinol + NADP(+) + n H(+)(out). NDH shuttles electrons from NAD(P)H:plastoquinone, via FMN and iron-sulfur (Fe-S) centers, to quinones in the photosynthetic chain and possibly in a chloroplast respiratory chain. The immediate electron acceptor for the enzyme in this species is believed to be plastoquinone. Couples the redox reaction to proton translocation, and thus conserves the redox energy in a proton gradient. This Dioscorea elephantipes (Elephant's foot yam) protein is NAD(P)H-quinone oxidoreductase subunit I, chloroplastic.